The chain runs to 437 residues: Putative metabolite transport protein NicT (437 aa).

12 consecutive transmembrane segments (helical) span residues 28-48 (LIPFLCFCYLAAYLDRINVGF), 66-86 (LGAGLFFVGYIIFEVPSNLIL), 93-113 (LWIARIMITWGLLSACTMFVT), 123-143 (FLLGAAEAGFLPGVLYYLTMW), 152-172 (IIALFMIGLPLSSVIGGPISG), 189-209 (WLFLLEAIPSVLLGILTFWAL), 254-274 (VWMLGGIDFSILLSAYAMGFW), 290-310 (IGLLTAIPSLAALAGMLMIGA), 320-340 (WHIIVPFIIGAIAMASSTLFS), 347-367 (VVLFAIASAAIIGAVPVFFSL), 374-394 (GTAAATGFALACSVANIAGLV), and 411-431 (AALWVFAGCLILSCFLVIALP).

This sequence belongs to the major facilitator superfamily.

The protein resides in the membrane. Functionally, probable transporter, possibly involved in the aerobic nicotinate degradation pathway. In Pseudomonas putida (strain ATCC 47054 / DSM 6125 / CFBP 8728 / NCIMB 11950 / KT2440), this protein is Putative metabolite transport protein NicT (nicT).